A 439-amino-acid chain; its full sequence is Ribosomal protein uS12 methylthiotransferase RimO (439 aa).

Positions 5–115 constitute an MTTase N-terminal domain; sequence PKIGFVSLGC…LIEAVHTHAP (111 aa). [4Fe-4S] cluster is bound by residues Cys-14, Cys-50, Cys-79, Cys-146, Cys-150, and Cys-153. The Radical SAM core domain occupies 132 to 369; it reads LTPRHYSYLK…MGLQAQISAD (238 aa). The TRAM domain maps to 372–439; the sequence is QRFVGTEQQV…ESTEYDLIAD (68 aa).

The protein belongs to the methylthiotransferase family. RimO subfamily. [4Fe-4S] cluster serves as cofactor.

The protein localises to the cytoplasm. The enzyme catalyses L-aspartate(89)-[ribosomal protein uS12]-hydrogen + (sulfur carrier)-SH + AH2 + 2 S-adenosyl-L-methionine = 3-methylsulfanyl-L-aspartate(89)-[ribosomal protein uS12]-hydrogen + (sulfur carrier)-H + 5'-deoxyadenosine + L-methionine + A + S-adenosyl-L-homocysteine + 2 H(+). In terms of biological role, catalyzes the methylthiolation of an aspartic acid residue of ribosomal protein uS12. This is Ribosomal protein uS12 methylthiotransferase RimO from Francisella philomiragia subsp. philomiragia (strain ATCC 25017 / CCUG 19701 / FSC 153 / O#319-036).